The following is a 332-amino-acid chain: 2,3-diketo-L-gulonate reductase (332 aa).

Residue His-44 is the Proton donor of the active site. NAD(+) contacts are provided by residues 168-174 (ITMVDMS), 224-225 (WK), and 304-306 (GHE).

It belongs to the LDH2/MDH2 oxidoreductase family. DlgD subfamily. Homodimer.

Its subcellular location is the cytoplasm. The catalysed reaction is 3-dehydro-L-gulonate + NAD(+) = 2,3-dioxo-L-gulonate + NADH + H(+). It catalyses the reaction 3-dehydro-L-gulonate + NADP(+) = 2,3-dioxo-L-gulonate + NADPH + H(+). Catalyzes the reduction of 2,3-diketo-L-gulonate in the presence of NADH, to form 3-keto-L-gulonate. The protein is 2,3-diketo-L-gulonate reductase of Klebsiella oxytoca.